The primary structure comprises 186 residues: Peptide deformylase 2 (186 aa).

Residues Cys-104 and His-146 each coordinate Fe cation. Glu-147 is an active-site residue. His-150 is a Fe cation binding site.

Belongs to the polypeptide deformylase family. The cofactor is Fe(2+).

The catalysed reaction is N-terminal N-formyl-L-methionyl-[peptide] + H2O = N-terminal L-methionyl-[peptide] + formate. In terms of biological role, removes the formyl group from the N-terminal Met of newly synthesized proteins. Requires at least a dipeptide for an efficient rate of reaction. N-terminal L-methionine is a prerequisite for activity but the enzyme has broad specificity at other positions. The protein is Peptide deformylase 2 of Streptomyces avermitilis (strain ATCC 31267 / DSM 46492 / JCM 5070 / NBRC 14893 / NCIMB 12804 / NRRL 8165 / MA-4680).